Consider the following 166-residue polypeptide: Cyclic pyranopterin monophosphate synthase (166 aa).

Substrate is bound by residues leucine 75–histidine 77 and methionine 113–glutamate 114. Aspartate 128 is an active-site residue.

Belongs to the MoaC family. As to quaternary structure, homohexamer; trimer of dimers.

It catalyses the reaction (8S)-3',8-cyclo-7,8-dihydroguanosine 5'-triphosphate = cyclic pyranopterin phosphate + diphosphate. Its pathway is cofactor biosynthesis; molybdopterin biosynthesis. Its function is as follows. Catalyzes the conversion of (8S)-3',8-cyclo-7,8-dihydroguanosine 5'-triphosphate to cyclic pyranopterin monophosphate (cPMP). The sequence is that of Cyclic pyranopterin monophosphate synthase from Thermomicrobium roseum (strain ATCC 27502 / DSM 5159 / P-2).